We begin with the raw amino-acid sequence, 179 residues long: Endoribonuclease YbeY (179 aa).

Residues His148, His152, and His158 each contribute to the Zn(2+) site.

Belongs to the endoribonuclease YbeY family. It depends on Zn(2+) as a cofactor.

The protein localises to the cytoplasm. Single strand-specific metallo-endoribonuclease involved in late-stage 70S ribosome quality control and in maturation of the 3' terminus of the 16S rRNA. In Prochlorococcus marinus (strain MIT 9215), this protein is Endoribonuclease YbeY.